Reading from the N-terminus, the 405-residue chain is Probable tRNA sulfurtransferase (405 aa).

Residues 60 to 165 (TAVMDRLKGV…LNGVFLSGQT (106 aa)) enclose the THUMP domain. ATP contacts are provided by residues 183-184 (ML), 208-209 (HF), Arg-265, Gly-287, and Gln-296.

Belongs to the ThiI family.

It localises to the cytoplasm. The enzyme catalyses [ThiI sulfur-carrier protein]-S-sulfanyl-L-cysteine + a uridine in tRNA + 2 reduced [2Fe-2S]-[ferredoxin] + ATP + H(+) = [ThiI sulfur-carrier protein]-L-cysteine + a 4-thiouridine in tRNA + 2 oxidized [2Fe-2S]-[ferredoxin] + AMP + diphosphate. The catalysed reaction is [ThiS sulfur-carrier protein]-C-terminal Gly-Gly-AMP + S-sulfanyl-L-cysteinyl-[cysteine desulfurase] + AH2 = [ThiS sulfur-carrier protein]-C-terminal-Gly-aminoethanethioate + L-cysteinyl-[cysteine desulfurase] + A + AMP + 2 H(+). The protein operates within cofactor biosynthesis; thiamine diphosphate biosynthesis. Functionally, catalyzes the ATP-dependent transfer of a sulfur to tRNA to produce 4-thiouridine in position 8 of tRNAs, which functions as a near-UV photosensor. Also catalyzes the transfer of sulfur to the sulfur carrier protein ThiS, forming ThiS-thiocarboxylate. This is a step in the synthesis of thiazole, in the thiamine biosynthesis pathway. The sulfur is donated as persulfide by IscS. This Levilactobacillus brevis (strain ATCC 367 / BCRC 12310 / CIP 105137 / JCM 1170 / LMG 11437 / NCIMB 947 / NCTC 947) (Lactobacillus brevis) protein is Probable tRNA sulfurtransferase.